Consider the following 299-residue polypeptide: Acetylglutamate kinase (299 aa).

Substrate contacts are provided by residues 70-71, R92, and N197; that span reads GG.

This sequence belongs to the acetylglutamate kinase family. ArgB subfamily.

Its subcellular location is the cytoplasm. It carries out the reaction N-acetyl-L-glutamate + ATP = N-acetyl-L-glutamyl 5-phosphate + ADP. The protein operates within amino-acid biosynthesis; L-arginine biosynthesis; N(2)-acetyl-L-ornithine from L-glutamate: step 2/4. Catalyzes the ATP-dependent phosphorylation of N-acetyl-L-glutamate. This chain is Acetylglutamate kinase, found in Acidiphilium cryptum (strain JF-5).